We begin with the raw amino-acid sequence, 301 residues long: 2-methoxy-6-polyprenyl-1,4-benzoquinol methylase, mitochondrial (301 aa).

The transit peptide at 1 to 16 (MQTTRSTRLLSLARRF) directs the protein to the mitochondrion. Over residues 20–31 (RTASQSAQNSKG) the composition is skewed to polar residues. Residues 20-44 (RTASQSAQNSKGMASGAESISGKEK) are disordered. S-adenosyl-L-methionine is bound by residues T111, D139, and 173-174 (DA).

It belongs to the class I-like SAM-binding methyltransferase superfamily. MenG/UbiE family. In terms of assembly, component of a multi-subunit COQ enzyme complex.

The protein localises to the mitochondrion inner membrane. The enzyme catalyses a 2-methoxy-6-(all-trans-polyprenyl)benzene-1,4-diol + S-adenosyl-L-methionine = a 5-methoxy-2-methyl-3-(all-trans-polyprenyl)benzene-1,4-diol + S-adenosyl-L-homocysteine + H(+). It participates in cofactor biosynthesis; ubiquinone biosynthesis. Functionally, methyltransferase required for the conversion of 2-polyprenyl-6-methoxy-1,4-benzoquinol (DDMQH2) to 2-polyprenyl-3-methyl-6-methoxy-1,4-benzoquinol (DMQH2). In Drosophila melanogaster (Fruit fly), this protein is 2-methoxy-6-polyprenyl-1,4-benzoquinol methylase, mitochondrial.